The sequence spans 358 residues: Alanine racemase (358 aa).

Residue Lys35 is the Proton acceptor; specific for D-alanine of the active site. Lys35 is modified (N6-(pyridoxal phosphate)lysine). Substrate is bound at residue Arg130. The active-site Proton acceptor; specific for L-alanine is Tyr255. Met303 lines the substrate pocket.

It belongs to the alanine racemase family. Requires pyridoxal 5'-phosphate as cofactor.

The enzyme catalyses L-alanine = D-alanine. Its pathway is amino-acid biosynthesis; D-alanine biosynthesis; D-alanine from L-alanine: step 1/1. Its function is as follows. Catalyzes the interconversion of L-alanine and D-alanine. May also act on other amino acids. The protein is Alanine racemase (alr) of Shewanella baltica (strain OS195).